Consider the following 129-residue polypeptide: Small ribosomal subunit protein uS12 (129 aa).

The residue at position 89 (Asp-89) is a 3-methylthioaspartic acid.

Belongs to the universal ribosomal protein uS12 family. In terms of assembly, part of the 30S ribosomal subunit. Contacts proteins S8 and S17. May interact with IF1 in the 30S initiation complex.

Its function is as follows. With S4 and S5 plays an important role in translational accuracy. Functionally, interacts with and stabilizes bases of the 16S rRNA that are involved in tRNA selection in the A site and with the mRNA backbone. Located at the interface of the 30S and 50S subunits, it traverses the body of the 30S subunit contacting proteins on the other side and probably holding the rRNA structure together. The combined cluster of proteins S8, S12 and S17 appears to hold together the shoulder and platform of the 30S subunit. This is Small ribosomal subunit protein uS12 from Helicobacter hepaticus (strain ATCC 51449 / 3B1).